A 467-amino-acid polypeptide reads, in one-letter code: Megakaryocyte-associated tyrosine-protein kinase (467 aa).

The tract at residues 1 to 20 (MPTQRWAPGTQCMTKCENSR) is disordered. In terms of domain architecture, SH3 spans 7–69 (APGTQCMTKC…AAAALRQREA (63 aa)). In terms of domain architecture, SH2 spans 81–170 (WFHGKISGQE…AICTKLVKPK (90 aa)). The Protein kinase domain occupies 194 to 443 (LTLGAQIGEG…IVEKLGRELR (250 aa)). Residues 200 to 208 (IGEGEFGAV) and lysine 221 each bind ATP. Catalysis depends on aspartate 311, which acts as the Proton acceptor. Residues 445-467 (VGVAAPAGGQEAEGSAPTRSQDP) are disordered.

It belongs to the protein kinase superfamily. Tyr protein kinase family. CSK subfamily. As to quaternary structure, interacts with KIT. In terms of tissue distribution, enriched in lymphoid tissues.

It localises to the cytoplasm. Its subcellular location is the membrane. The enzyme catalyses L-tyrosyl-[protein] + ATP = O-phospho-L-tyrosyl-[protein] + ADP + H(+). Functionally, could play a significant role in the signal transduction of hematopoietic cells. May regulate tyrosine kinase activity of SRC-family members in brain. The sequence is that of Megakaryocyte-associated tyrosine-protein kinase (Matk) from Rattus norvegicus (Rat).